Here is a 118-residue protein sequence, read N- to C-terminus: UPF0344 protein Aflv_2205 (118 aa).

4 helical membrane passes run 4-24, 32-52, 60-80, and 96-116; these read AHIT…ALQA, MLHM…AWIL, FLYI…EMIL, and FIVA…GFSF.

Belongs to the UPF0344 family.

The protein resides in the cell membrane. The polypeptide is UPF0344 protein Aflv_2205 (Anoxybacillus flavithermus (strain DSM 21510 / WK1)).